Here is a 248-residue protein sequence, read N- to C-terminus: Homeobox-leucine zipper protein HOX15 (248 aa).

Residues 1–44 form a disordered region; that stretch reads MAQDDEDVGLALGLSLGSGGHRRQRESRDEAPSSAAASLLTLRL. Positions 32–44 are enriched in low complexity; sequence PSSAAASLLTLRL. The segment at residues 91-150 is a DNA-binding region (homeobox); sequence NSRKKLRLSKEQSALLEDRFKEHSTLNPKQKVALAKQLNLRPRQVEVWFQNRRARTKLKQ. The interval 149 to 193 is leucine-zipper; it reads KQTEVDCELLKRCCETLTEENRRLHRELQQLRALTHSTAAGFFMA. The interval 223-248 is disordered; that stretch reads PTAAADRTNKPTAPHLFSPFAKSAAC.

This sequence belongs to the HD-ZIP homeobox family. Class II subfamily. Expressed in seedlings, stems, leaf blades and panicles.

The protein localises to the nucleus. Its function is as follows. Probable transcription factor. The chain is Homeobox-leucine zipper protein HOX15 (HOX15) from Oryza sativa subsp. indica (Rice).